Reading from the N-terminus, the 238-residue chain is Tyrosine recombinase XerD-like (238 aa).

The Core-binding (CB) domain maps to 1–75; it reads MKLPNEIDEY…SANQYLLFLY (75 aa). The Tyr recombinase domain maps to 90-238; it reads VQKKSQTAQS…TITTLEKYYR (149 aa). Residues Lys-154 and Arg-204 contribute to the active site. Tyr-236 functions as the O-(3'-phospho-DNA)-tyrosine intermediate in the catalytic mechanism.

It belongs to the 'phage' integrase family. XerD-like subfamily.

The protein resides in the cytoplasm. In terms of biological role, putative tyrosine recombinase. Not involved in the cutting and rejoining of the recombining DNA molecules on dif(SL) site. The polypeptide is Tyrosine recombinase XerD-like (ynbA) (Lactococcus lactis subsp. lactis (strain IL1403) (Streptococcus lactis)).